The chain runs to 561 residues: Putative transport protein CKO_02260 (561 aa).

5 consecutive transmembrane segments (helical) span residues Leu-8–Gly-28, Leu-32–Gln-52, Phe-66–Phe-86, Met-94–Phe-114, and Asn-158–Ala-178. RCK C-terminal domains follow at residues Arg-200–Asn-288 and Val-292–Phe-373. 5 consecutive transmembrane segments (helical) span residues Leu-383–Phe-403, Phe-406–Leu-426, Phe-447–Gly-467, Met-475–Ala-495, and Ala-540–Leu-560.

Belongs to the AAE transporter (TC 2.A.81) family. YbjL subfamily.

The protein resides in the cell membrane. This chain is Putative transport protein CKO_02260, found in Citrobacter koseri (strain ATCC BAA-895 / CDC 4225-83 / SGSC4696).